The chain runs to 97 residues: Large ribosomal subunit protein uL23 (97 aa).

This sequence belongs to the universal ribosomal protein uL23 family. In terms of assembly, part of the 50S ribosomal subunit. Contacts protein L29, and trigger factor when it is bound to the ribosome.

In terms of biological role, one of the early assembly proteins it binds 23S rRNA. One of the proteins that surrounds the polypeptide exit tunnel on the outside of the ribosome. Forms the main docking site for trigger factor binding to the ribosome. This Sinorhizobium medicae (strain WSM419) (Ensifer medicae) protein is Large ribosomal subunit protein uL23.